Reading from the N-terminus, the 106-residue chain is Large ribosomal subunit protein uL24 (106 aa).

This sequence belongs to the universal ribosomal protein uL24 family. Part of the 50S ribosomal subunit.

Functionally, one of two assembly initiator proteins, it binds directly to the 5'-end of the 23S rRNA, where it nucleates assembly of the 50S subunit. Its function is as follows. One of the proteins that surrounds the polypeptide exit tunnel on the outside of the subunit. The protein is Large ribosomal subunit protein uL24 of Clostridium tetani (strain Massachusetts / E88).